The following is a 269-amino-acid chain: MRPGFSVPGESGRERPAFPLPCACGTLRPMPPPAKKPAQKKKPLPLLPDFRFEIEEGAPARLVCGVDEAGRGPLAGPVVAAAVIIDLTRCPEGLNDSKKLDAARRADLLAELADCAEIGVGIASVEEIDEINILHATMLAMTRAVASLPRAPHIALIDGNRCPPSLACASRAVIGGDALARSIAAASIVAKVTRDRMMAALAETHPGYGFEKHMGYSTPEHFDALSRLGPCAIHRRSFAPVRKMLSPGLEEGLDLVSGESVNLLIQKAY.

In terms of domain architecture, RNase H type-2 spans 61–250; that stretch reads RLVCGVDEAG…VRKMLSPGLE (190 aa). A divalent metal cation contacts are provided by Asp-67, Glu-68, and Asp-158.

Belongs to the RNase HII family. Mn(2+) serves as cofactor. The cofactor is Mg(2+).

It localises to the cytoplasm. It carries out the reaction Endonucleolytic cleavage to 5'-phosphomonoester.. Endonuclease that specifically degrades the RNA of RNA-DNA hybrids. This is Ribonuclease HII from Parvibaculum lavamentivorans (strain DS-1 / DSM 13023 / NCIMB 13966).